The chain runs to 139 residues: Immunogenic miracidial antigen 8I' (139 aa).

The tract at residues 61-139 is disordered; that stretch reads IDVGDEDYHD…PKKYGSGYKH (79 aa). Acidic residues predominate over residues 64–85; sequence GDEDYHDGDDDVDYTDDVDDVD. Residues 90-103 show a composition bias toward polar residues; the sequence is SPSQLLQGGYQRNQ.

This sequence belongs to the immunogenic miracidial antigen family.

The sequence is that of Immunogenic miracidial antigen 8I' (8I') from Schistosoma japonicum (Blood fluke).